The primary structure comprises 568 residues: Sesquiterpene synthase 14 (568 aa).

Mg(2+) contacts are provided by Asp-319, Asp-323, Asp-463, and Glu-471. Positions 319 to 323 (DDLYD) match the DDXXD motif motif.

This sequence belongs to the terpene synthase family. Tpsa subfamily. It depends on Mg(2+) as a cofactor. The cofactor is Mn(2+). Mostly expressed in roots, to a lower extent in flowers and, at low levels, in fruits.

It catalyses the reaction (2Z,6Z)-farnesyl diphosphate = (E)-alpha-bisabolene + diphosphate. It carries out the reaction (2Z,6Z)-farnesyl diphosphate = beta-bisabolene + diphosphate. The catalysed reaction is (2E,6E)-farnesyl diphosphate = beta-bisabolene + diphosphate. The enzyme catalyses (2E,6E)-farnesyl diphosphate = (Z)-gamma-bisabolene + diphosphate. It catalyses the reaction (2E,6E)-farnesyl diphosphate = (E)-gamma-bisabolene + diphosphate. It carries out the reaction (2Z,6Z)-farnesyl diphosphate = (E)-gamma-bisabolene + diphosphate. It participates in secondary metabolite biosynthesis; terpenoid biosynthesis. In terms of biological role, sesquiterpene synthase involved in the biosynthesis of volatile compounds. Mediates the conversion of (2E,6E)-farnesyl diphosphate ((EE)-FPP) into beta-bisabolene, and of (2Z,6Z)-farnesyl diphosphate ((ZZ)-FPP) into alpha-bisabolene, but also smaller amounts of (Z)-gamma-bisabolene, (E)-gamma-bisabolene and nerolidol. In Solanum lycopersicum (Tomato), this protein is Sesquiterpene synthase 14.